The chain runs to 114 residues: DNA-directed RNA polymerase subunit omega (114 aa).

Belongs to the RNA polymerase subunit omega family. As to quaternary structure, the RNAP catalytic core consists of 2 alpha, 1 beta, 1 beta' and 1 omega subunit. When a sigma factor is associated with the core the holoenzyme is formed, which can initiate transcription.

It catalyses the reaction RNA(n) + a ribonucleoside 5'-triphosphate = RNA(n+1) + diphosphate. Functionally, promotes RNA polymerase assembly. Latches the N- and C-terminal regions of the beta' subunit thereby facilitating its interaction with the beta and alpha subunits. The protein is DNA-directed RNA polymerase subunit omega of Erythrobacter litoralis (strain HTCC2594).